A 427-amino-acid chain; its full sequence is MYKRYFSTSLKTNQQALKKILEEKTYQVTTYARPSDLCITRGLNAKLFDDFNNKEYIDFTAGIAVTALGHANPKVAEILQTQATKLVHSSNLYFTKECLDLSEKLIEKTKKFGGQHDASKVFLCNSGTEANEAALKFAKKHGITKNPKKQGIIAFENSFHGRTMGALSVTWNKKYRTPFGDLVPHVSFLNINDELSKIKDFINTKKDEIAGLIIEPIQGEGGIFPIPIEKLVALKEICQKNDIIVIYDEIQCGLGRTGNLWAHAALPKAAHPDIFTSAKALGNGFPIAATVVNEKVNNALQVGDHGTTYGGNPLGCAVSNYVLDVIGDQAFLDSVTKKGELLKKGLLKIKEQHPDKISDVRGSGLIWGVEFKDAPGAIVQKARELGLLVITAGKTTVRFVPSLTIEDEVVEEGLTIFNKAVNDVFSK.

The residue at position 279 (lysine 279) is an N6-(pyridoxal phosphate)lysine.

The protein belongs to the class-III pyridoxal-phosphate-dependent aminotransferase family. Pyridoxal 5'-phosphate is required as a cofactor.

The protein resides in the mitochondrion matrix. The enzyme catalyses N(2)-acetyl-L-ornithine + 2-oxoglutarate = N-acetyl-L-glutamate 5-semialdehyde + L-glutamate. Its pathway is amino-acid biosynthesis; L-arginine biosynthesis; N(2)-acetyl-L-ornithine from L-glutamate: step 4/4. In Candida glabrata (strain ATCC 2001 / BCRC 20586 / JCM 3761 / NBRC 0622 / NRRL Y-65 / CBS 138) (Yeast), this protein is Acetylornithine aminotransferase, mitochondrial (ARG8).